The chain runs to 526 residues: Glucose-6-phosphate isomerase (526 aa).

E343 (proton donor) is an active-site residue. Catalysis depends on residues H374 and K494.

This sequence belongs to the GPI family.

The protein localises to the cytoplasm. It catalyses the reaction alpha-D-glucose 6-phosphate = beta-D-fructose 6-phosphate. The protein operates within carbohydrate biosynthesis; gluconeogenesis. Its pathway is carbohydrate degradation; glycolysis; D-glyceraldehyde 3-phosphate and glycerone phosphate from D-glucose: step 2/4. Its function is as follows. Catalyzes the reversible isomerization of glucose-6-phosphate to fructose-6-phosphate. The polypeptide is Glucose-6-phosphate isomerase (Dechloromonas aromatica (strain RCB)).